The following is a 438-amino-acid chain: Protein kinase PINOID (438 aa).

The tract at residues 1–24 is disordered; sequence MLRESDGEMSLGTTNSPISSGTES. The span at 11-24 shows a compositional bias: polar residues; the sequence is LGTTNSPISSGTES. The 320-residue stretch at 75–394 folds into the Protein kinase domain; that stretch reads FRLMRRIGAG…AAEVKVHPFF (320 aa). ATP is bound by residues 81 to 89 and lysine 109; that span reads IGAGDIGTV. Residue aspartate 205 is the Proton acceptor of the active site. The region spanning 395–438 is the AGC-kinase C-terminal domain; the sequence is KGLNFALIRTLTPPEIPSSVVKKPMKSATFSGRSSNKPAAFDYF.

It belongs to the protein kinase superfamily. Ser/Thr protein kinase family. As to quaternary structure, interacts with PDK1, CML12 and PBP1. Component of a complex made of PINs (e.g. PIN1 and PIN2), MAB4/MELs (e.g. NPY1/MAB4 and NPY5/MEL1) and AGC kinases (e.g. D6PK and PID) at the plasma membrane. Binds directly to PIN2, NPY1/MAB4 and NPY5/MEL1. In terms of processing, autophosphorylated. Phosphorylated by PDK1. Expressed in root hair cells, shoot xylem parenchyma cells and endodermis around the vasculature. Expressed in anther primordia, vasculature of the growing flower stalk, young pedicels and bracts and developing sepals, but not in petals. In pistils, transiently expressed in the vasculature of the style and the septum, and in the integuments and funiculus of the developing ovule.

It is found in the cytoplasm. Its subcellular location is the cytosol. It localises to the cell membrane. The enzyme catalyses L-seryl-[protein] + ATP = O-phospho-L-seryl-[protein] + ADP + H(+). It carries out the reaction L-threonyl-[protein] + ATP = O-phospho-L-threonyl-[protein] + ADP + H(+). Its activity is regulated as follows. Activated by magnesium and PDK1. Inhibited by staurosporine. Repressed by calcium. Its function is as follows. Serine/threonine-protein kinase involved in the regulation of auxin signaling. Acts as a positive regulator of cellular auxin efflux and regulates organ development by enhancing polar auxin transport. Phosphorylates conserved serine residues in the PIN auxin efflux carriers. Phosphorylation of PIN proteins is required and sufficient for apical-basal PIN polarity that enables directional intercellular auxin fluxes, which mediate differential growth, tissue patterning and organogenesis. Phosphorylates PIN proteins (e.g. PIN1 and PIN2), especially when NPY proteins (e.g. NPY1/MAB4 and NPY5/MEL1) are recruited at the plasma membrane; this enhances the polarized localizations (apical or basal) of PINs in the cell by limiting their lateral diffusion-based escape. Acts in association with PIN1 to control the establishment of bilateral symmetry and promotion of cotyledon outgrowth. Regulates root gravitropism through modulation of PIN2-dependent basipetal auxin transport. Required for polarization of PIN3-dependent auxin transport for hypocotyl gravitropic response. The protein kinase activity of PID is essential for its auxin efflux regulatory function. PID kinase and PP2A phosphatase activities antagonistically regulate phosphorylation of PIN proteins, affecting PIN sorting. This is Protein kinase PINOID from Arabidopsis thaliana (Mouse-ear cress).